The following is a 98-amino-acid chain: Integration host factor subunit alpha (98 aa).

A disordered region spans residues Phe-52 to Ile-73. Over residues Leu-54–Ile-73 the composition is skewed to basic and acidic residues.

This sequence belongs to the bacterial histone-like protein family. In terms of assembly, heterodimer of an alpha and a beta chain.

In terms of biological role, this protein is one of the two subunits of integration host factor, a specific DNA-binding protein that functions in genetic recombination as well as in transcriptional and translational control. The protein is Integration host factor subunit alpha of Pseudoalteromonas atlantica (strain T6c / ATCC BAA-1087).